Reading from the N-terminus, the 364-residue chain is Aminomethyltransferase (364 aa).

This sequence belongs to the GcvT family. The glycine cleavage system is composed of four proteins: P, T, L and H.

It carries out the reaction N(6)-[(R)-S(8)-aminomethyldihydrolipoyl]-L-lysyl-[protein] + (6S)-5,6,7,8-tetrahydrofolate = N(6)-[(R)-dihydrolipoyl]-L-lysyl-[protein] + (6R)-5,10-methylene-5,6,7,8-tetrahydrofolate + NH4(+). Functionally, the glycine cleavage system catalyzes the degradation of glycine. This Shewanella baltica (strain OS223) protein is Aminomethyltransferase.